We begin with the raw amino-acid sequence, 208 residues long: Methionine-R-sulfoxide reductase B1 (208 aa).

The span at 27–36 (QDSDNPDKRY) shows a compositional bias: basic and acidic residues. The segment at 27 to 48 (QDSDNPDKRYSGPAATMDNKSE) is disordered. A MsrB domain is found at 54 to 188 (KEELRKRLTP…NSASIEFVNA (135 aa)). Zn(2+)-binding residues include Cys93, Cys96, Cys154, and Cys157. A disulfide bridge connects residues Cys111 and Cys177. Catalysis depends on Cys177, which acts as the Nucleophile. The disordered stretch occupies residues 189–208 (DPATSSPPVATPTAAPIAQQ).

This sequence belongs to the MsrB Met sulfoxide reductase family. Requires Zn(2+) as cofactor. As to expression, present in the embryonic nervous system (brain and cord) in neuronal cell bodies, along axons. Also present in embryonic muscles in motor axons. Localizes to growing bristle tips where it is distributed in small puntae. Present at and at sites of actin localization.

The protein resides in the cytoplasm. Its subcellular location is the nucleus. It is found in the cytoskeleton. It carries out the reaction L-methionyl-[protein] + [thioredoxin]-disulfide + H2O = L-methionyl-(R)-S-oxide-[protein] + [thioredoxin]-dithiol. Its function is as follows. Methionine-sulfoxide reductase that specifically reduces methionine (R)-sulfoxide back to methionine. While in many cases methionine oxidation is the result of random oxidation following oxidative stress, methionine oxidation is also a post-translational modification that takes place on specific residues. Acts as a regulator of actin assembly by reducing methionine (R)-sulfoxide mediated by Mical on actin thereby promoting filament repolymerization. The sequence is that of Methionine-R-sulfoxide reductase B1 (SelR) from Drosophila melanogaster (Fruit fly).